A 330-amino-acid chain; its full sequence is Methionyl-tRNA formyltransferase (330 aa).

Residue 112-115 coordinates (6S)-5,6,7,8-tetrahydrofolate; sequence SLLP.

This sequence belongs to the Fmt family.

The enzyme catalyses L-methionyl-tRNA(fMet) + (6R)-10-formyltetrahydrofolate = N-formyl-L-methionyl-tRNA(fMet) + (6S)-5,6,7,8-tetrahydrofolate + H(+). Attaches a formyl group to the free amino group of methionyl-tRNA(fMet). The formyl group appears to play a dual role in the initiator identity of N-formylmethionyl-tRNA by promoting its recognition by IF2 and preventing the misappropriation of this tRNA by the elongation apparatus. The chain is Methionyl-tRNA formyltransferase from Synechocystis sp. (strain ATCC 27184 / PCC 6803 / Kazusa).